A 277-amino-acid polypeptide reads, in one-letter code: Kallikrein-13 (277 aa).

Positions 1 to 16 (MWPLALVIASLTLALS) are cleaved as a signal peptide. A glycan (N-linked (GlcNAc...) asparagine) is linked at asparagine 30. The Peptidase S1 domain maps to 36-263 (LPGGYTCFPH…YVLWIRETIR (228 aa)). Cystine bridges form between cysteine 42–cysteine 178, cysteine 61–cysteine 77, cysteine 157–cysteine 224, cysteine 189–cysteine 203, and cysteine 214–cysteine 239. Active-site charge relay system residues include histidine 76 and aspartate 124. Catalysis depends on serine 218, which acts as the Charge relay system. A glycan (N-linked (GlcNAc...) asparagine) is linked at asparagine 225.

The protein belongs to the peptidase S1 family. Kallikrein subfamily. As to expression, expressed in prostate, breast, testis and salivary gland.

The protein resides in the secreted. This Homo sapiens (Human) protein is Kallikrein-13 (KLK13).